The chain runs to 1413 residues: DNA-directed RNA polymerase subunit beta' (1413 aa).

Zn(2+) is bound by residues C70, C72, C85, and C88. 3 residues coordinate Mg(2+): D460, D462, and D464. The Zn(2+) site is built by C814, C888, C895, and C898.

The protein belongs to the RNA polymerase beta' chain family. As to quaternary structure, the RNAP catalytic core consists of 2 alpha, 1 beta, 1 beta' and 1 omega subunit. When a sigma factor is associated with the core the holoenzyme is formed, which can initiate transcription. Mg(2+) is required as a cofactor. The cofactor is Zn(2+).

The enzyme catalyses RNA(n) + a ribonucleoside 5'-triphosphate = RNA(n+1) + diphosphate. DNA-dependent RNA polymerase catalyzes the transcription of DNA into RNA using the four ribonucleoside triphosphates as substrates. The polypeptide is DNA-directed RNA polymerase subunit beta' (Buchnera aphidicola subsp. Schizaphis graminum (strain Sg)).